The primary structure comprises 118 residues: Secreted effector CSEP0064 (118 aa).

The N-terminal stretch at 1–21 (MRPFQLLSALAIFINLEAVEA) is a signal peptide. A disulfide bridge links cysteine 27 with cysteine 113.

Interacts in planta with the pathogenesis-related protein PR10.

The protein resides in the secreted. It is found in the host cell. Secreted effector that increases susceptibility to infection in both monocotyledonous and dicotyledonous plants. Non-catalytic homolog of fungal RNases that binds host RNA and inhibits the degradation of host ribosomal RNA induced by ribosome-inactivating proteins (RIPs), preventing host cell death, an inviable interaction and demise of the fungus. The protein is Secreted effector CSEP0064 of Blumeria graminis f. sp. hordei (strain DH14) (Barley powdery mildew).